Here is a 440-residue protein sequence, read N- to C-terminus: Enolase (440 aa).

The interval 120–189 is igE-binding determinant; it reads KAAAAEKRVP…TEAMRQGAEV (70 aa). The substrate site is built by His-159 and Glu-168. Glu-211 (proton donor) is an active-site residue. 3 residues coordinate Mg(2+): Asp-246, Glu-297, and Asp-324. Positions 297 and 324 each coordinate substrate. Catalysis depends on Lys-349, which acts as the Proton acceptor. Substrate contacts are provided by residues 376–379 and Lys-400; that span reads SHRS.

It belongs to the enolase family. In terms of assembly, homodimer. Mg(2+) serves as cofactor.

It is found in the cytoplasm. It catalyses the reaction (2R)-2-phosphoglycerate = phosphoenolpyruvate + H2O. The protein operates within carbohydrate degradation; glycolysis; pyruvate from D-glyceraldehyde 3-phosphate: step 4/5. The protein is Enolase (ENO) of Davidiella tassiana (Mycosphaerella tassiana).